Consider the following 815-residue polypeptide: (-)-kolavenyl diphosphate synthase TPS14, chloroplastic (815 aa).

The N-terminal 51 residues, 1-51 (MFMSSSSSSHARRPQLSSFSYLHPPLPFPGLSFFNTRDKRVNFDSTRIICI), are a transit peptide targeting the chloroplast. Substrate is bound at residue K247. Mg(2+) contacts are provided by D379 and D381. Residues 379 to 382 (DIDD) carry the DXDD motif motif. A substrate-binding site is contributed by K465.

This sequence belongs to the terpene synthase family. Tpsc subfamily. The cofactor is Mg(2+).

The protein resides in the plastid. The protein localises to the chloroplast. It catalyses the reaction (2E,6E,10E)-geranylgeranyl diphosphate = (-)-kolavenyl diphosphate. Its activity is regulated as follows. Inhibited by high concentrations of magnesium. Its function is as follows. Diterpene synthase that catalyzes the formation of (-)-kolavenyl diphosphate from geranylgeranyl diphosphate (GGPP). The protein is (-)-kolavenyl diphosphate synthase TPS14, chloroplastic of Tripterygium wilfordii (Thunder God vine).